Here is a 756-residue protein sequence, read N- to C-terminus: Protease KEX1 (756 aa).

Residues 1-24 (MILSSQLMLALIAVSGYGKAMQVP) form the signal peptide. N-linked (GlcNAc...) asparagine glycosylation is found at Asn121, Asn144, and Asn152. Residues 130-440 (QWHLINPNYP…FGKLDAYNIV (311 aa)) enclose the Peptidase S8 domain. Active-site charge relay system residues include Asp164 and His202. Disulfide bonds link Cys218–Cys365 and Cys310–Cys340. Ser373 (charge relay system) is an active-site residue. N-linked (GlcNAc...) asparagine glycans are attached at residues Asn392 and Asn538. The region spanning 449 to 583 (VNPQGWLYLP…RLKMFGETID (135 aa)) is the P/Homo B domain. Positions 599-632 (AEVKSTESKTTTPTAQTSSFTTTSGEETSGANKL) are disordered. Positions 606-628 (SKTTTPTAQTSSFTTTSGEETSG) are enriched in low complexity. Residues 641–661 (LYLAIFVIGAIVIIIYYLFFL) traverse the membrane as a helical segment. The tract at residues 715-756 (EEELSPRESSSNNPFGNESLESFDNSPDHTSNLLGQNSIPNK) is disordered. Positions 721–756 (RESSSNNPFGNESLESFDNSPDHTSNLLGQNSIPNK) are enriched in polar residues.

It belongs to the peptidase S8 family. Furin subfamily. Requires Ca(2+) as cofactor.

Its subcellular location is the membrane. Its function is as follows. Probably involved in the processing of the precursor of m1-toxin and alpha-factor. This chain is Protease KEX1 (KEX1), found in Kluyveromyces lactis (strain ATCC 8585 / CBS 2359 / DSM 70799 / NBRC 1267 / NRRL Y-1140 / WM37) (Yeast).